Here is a 251-residue protein sequence, read N- to C-terminus: Probable transcriptional regulatory protein SYNPCC7002_A0851 (251 aa).

In terms of domain architecture, Response regulatory spans 20–141; the sequence is RILVVEDEAV…ELVARCRALL (122 aa). At Asp76 the chain carries 4-aspartylphosphate. A DNA-binding region (ompR/PhoB-type) is located at residues 153-251; the sequence is NSVRQFKDIS…TVRGFGYRFG (99 aa).

Phosphorylation.

The chain is Probable transcriptional regulatory protein SYNPCC7002_A0851 from Picosynechococcus sp. (strain ATCC 27264 / PCC 7002 / PR-6) (Agmenellum quadruplicatum).